The sequence spans 518 residues: MTQLHFDNRLRQQLPGYQEEGARRREVRAAWSAVMPTPVAAPYLIAHSAEMAHVLGLDASEVASAAFAQVFGGNALYPGMQPWAVNYGGHQFGHWAGQLGDGRAISLGEAIGIDGGRYELQLKGAGPTPYSRGADGRAVLRSSIREFLCSESMHHLGVPTTRALSLVGTGDAVVRDMFYDGRPQREPGAIVCRVAPSFIRFGNFELPSARGDNALLRQWVDFTIARDFPELVGTAEALYADWFAQVCQRTAVMVAHWMRVGFVHGVMNTDNMSILGLTIDYGPYGWVDDYDPDWTPNTTDAQGRRYRFGTQPQVAYWNLGRLAQAMAPLFADQAPLQQGLNRFRDTYLACDRRDTAAKLGLAECRDEDLELIDALRALMRDAEMDMTLTFRGLIDLSPVHPDPAQLHDAFYDDHKRVASASQLQEWLQRYAARLQQDALSPDERRALMRLANPRYVLRNYLAQQAIDQAEQGDPSGVQELLEVMRRPYDDQSGRAAFAARRPEWARDRAGCSMLSCSS.

ATP-binding residues include glycine 100, glycine 102, arginine 103, lysine 123, aspartate 135, glycine 136, arginine 193, and arginine 200. Catalysis depends on aspartate 270, which acts as the Proton acceptor. 2 residues coordinate Mg(2+): asparagine 271 and aspartate 280. Residue aspartate 280 coordinates ATP.

Belongs to the SELO family. Requires Mg(2+) as cofactor. Mn(2+) is required as a cofactor.

The catalysed reaction is L-seryl-[protein] + ATP = 3-O-(5'-adenylyl)-L-seryl-[protein] + diphosphate. The enzyme catalyses L-threonyl-[protein] + ATP = 3-O-(5'-adenylyl)-L-threonyl-[protein] + diphosphate. It carries out the reaction L-tyrosyl-[protein] + ATP = O-(5'-adenylyl)-L-tyrosyl-[protein] + diphosphate. It catalyses the reaction L-histidyl-[protein] + UTP = N(tele)-(5'-uridylyl)-L-histidyl-[protein] + diphosphate. The catalysed reaction is L-seryl-[protein] + UTP = O-(5'-uridylyl)-L-seryl-[protein] + diphosphate. The enzyme catalyses L-tyrosyl-[protein] + UTP = O-(5'-uridylyl)-L-tyrosyl-[protein] + diphosphate. Functionally, nucleotidyltransferase involved in the post-translational modification of proteins. It can catalyze the addition of adenosine monophosphate (AMP) or uridine monophosphate (UMP) to a protein, resulting in modifications known as AMPylation and UMPylation. The polypeptide is Protein nucleotidyltransferase YdiU (Xanthomonas oryzae pv. oryzae (strain MAFF 311018)).